We begin with the raw amino-acid sequence, 477 residues long: Zinc metalloproteinase/disintegrin (477 aa).

An N-terminal signal peptide occupies residues 1–19 (MIQVLLVIICLAVPYQGSS). The propeptide occupies 20–186 (IILESGNVND…PIKKASQSNL (167 aa)). Positions 192–388 (RYIELVIVAD…QKPQCILNKP (197 aa)) constitute a Peptidase M12B domain. 2 residues coordinate Ca(2+): E195 and D279. Intrachain disulfides connect C303–C383, C343–C367, and C345–C350. H328 serves as a coordination point for Zn(2+). E329 is a catalytic residue. H332 and H338 together coordinate Zn(2+). Ca(2+) contacts are provided by C383 and N386. Positions 389-404 (LRTDTVSTPVSGNELL) are excised as a propeptide. Residues 396–477 (TPVSGNELLE…AGCPRNPFHA (82 aa)) form the Disintegrin domain. 6 disulfide bridges follow: C410/C425, C412/C420, C419/C442, C433/C439, C438/C463, and C451/C470. The short motif at 455–457 (RGD) is the Cell attachment site element.

Belongs to the venom metalloproteinase (M12B) family. P-II subfamily. P-IIa sub-subfamily. Monomer. Zn(2+) serves as cofactor. As to expression, expressed by the venom gland.

It localises to the secreted. In terms of biological role, impairs hemostasis in the envenomed animal. Its function is as follows. Inhibits platelet aggregation induced by ADP, thrombin, platelet-activating factor and collagen. Acts by inhibiting fibrinogen interaction with platelet receptors GPIIb/GPIIIa (ITGA2B/ITGB3). The sequence is that of Zinc metalloproteinase/disintegrin from Gloydius halys (Chinese water mocassin).